The primary structure comprises 166 residues: Small ribosomal subunit protein uS9 (166 aa).

Residues 1 to 16 (MSDTTNEVEETYEVDE) show a composition bias toward acidic residues. The interval 1–45 (MSDTTNEVEETYEVDEQGIAYSSESAPSADAPLRPATIAPANATG) is disordered.

The protein belongs to the universal ribosomal protein uS9 family.

In Nocardioides sp. (strain ATCC BAA-499 / JS614), this protein is Small ribosomal subunit protein uS9.